The primary structure comprises 1295 residues: Unconventional myosin-VI (1295 aa).

Positions 2 to 53 (EDGRPVWAPHPTEGFQMGNIVDIGPDSLTIEPLGQKGKTFLALINQVFPAEE) constitute a Myosin N-terminal SH3-like domain. The Myosin motor domain maps to 57–771 (KDVEDNCSLM…KFAEFDQIMK (715 aa)). 151–158 (GESGAGKT) is a binding site for ATP. The residue at position 267 (Ser267) is a Phosphoserine. Residues 273-317 (YLNRGCTRYFANKETDKQILQNRKTPEHLKAGSLKDPLLDDHGDF) are responsible for slow ATPase activity. Thr405 bears the Phosphothreonine mark. A Phosphoserine modification is found at Ser604. The segment at 651–673 (LNLLLDKLRSTGASFIRCIKPNL) is actin-binding. The tract at residues 782–810 (KRVNHWLICSRWKKVQWCSLSVIKLKNKI) is required for binding calmodulin. The 30-residue stretch at 813–842 (RAEACIKMQKTIRMWLCKRRHKPRIDGLVK) folds into the IQ domain. Residues 835–916 (PRIDGLVKVG…EVLLSALQKK (82 aa)) are three-helix bundle. The SAH stretch occupies residues 917–984 (KQQEEEAERL…EDDEKRIQAE (68 aa)). The interval 934-955 (EKERKRREEDEQRRRKEEEERR) is disordered. Residues 1061 to 1286 (KEMSEILSRG…ESRQARPTYA (226 aa)) are interaction with TAX1BP1 and CALCOCO2/NDP52. The interaction with OPTN stretch occupies residues 1117 to 1119 (RRL). Phosphoserine is present on Ser1156. The interaction with TOM1 stretch occupies residues 1158–1286 (QQNPAAQLPA…ESRQARPTYA (129 aa)).

It belongs to the TRAFAC class myosin-kinesin ATPase superfamily. Myosin family. In terms of assembly, homodimer; dimerization seems to implicate the unfolding of the three-helix bundle region creating an additional calmodulin binding site, and cargo binding. Able to function as a monomer under specific conditions in vitro. Forms a complex with CFTR and DAB2 in the apical membrane of epithelial cells. Component of the DISP/DOCK7-induced septin displacement complex, at least composed of DOCK7, LRCH3 and MYO6. Binding to calmodulin through a unique insert, not found in other myosins, located in the neck region between the motor domain and the IQ domain appears to contribute to the directionality reversal. This interaction occurs only if the C-terminal lobe of calmodulin is occupied by calcium. Interaction with F-actin/ACTN1 occurs only at the apical brush border domain of the proximal tubule cells. Interacts with DAB2. In vitro, the C-terminal globular tail binds a C-terminal region of DAB2. Interacts with CFTR. Interacts with CABP5. Interacts (via residues 1158-1286) with TOM1 (via residues 392-463). Interacts (via residues 1060-1285) with OPTN. Interacts (via residues 1060-1285) with TAX1BP1 and CALCOCO2/NDP52. Interacts with TOM1L2. Interacts with CLIC5; may work together in a complex which also includes RDX and MYO6 to stabilize linkages between the plasma membrane and subjacent actin cytoskeleton at the base of stereocilia. Post-translationally, phosphorylation in the motor domain, induced by EGF, results in translocation of MYO6 from the cell surface to membrane ruffles and affects F-actin dynamics. Phosphorylated in vitro by p21-activated kinase (PAK). As to expression, expressed in the retina (at protein level).

It localises to the golgi apparatus. The protein resides in the trans-Golgi network membrane. It is found in the nucleus. The protein localises to the cytoplasm. Its subcellular location is the perinuclear region. It localises to the membrane. The protein resides in the clathrin-coated pit. It is found in the cytoplasmic vesicle. The protein localises to the clathrin-coated vesicle. Its subcellular location is the cell projection. It localises to the filopodium. The protein resides in the ruffle membrane. It is found in the microvillus. The protein localises to the cytosol. Its function is as follows. Myosins are actin-based motor molecules with ATPase activity. Unconventional myosins serve in intracellular movements. Myosin 6 is a reverse-direction motor protein that moves towards the minus-end of actin filaments. Has slow rate of actin-activated ADP release due to weak ATP binding. Functions in a variety of intracellular processes such as vesicular membrane trafficking and cell migration. Required for the structural integrity of the Golgi apparatus via the p53-dependent pro-survival pathway. Appears to be involved in a very early step of clathrin-mediated endocytosis in polarized epithelial cells. Together with TOM1, mediates delivery of endocytic cargo to autophagosomes thereby promoting autophagosome maturation and driving fusion with lysosomes. Links TOM1 with autophagy receptors, such as TAX1BP1; CALCOCO2/NDP52 and OPTN. May act as a regulator of F-actin dynamics. As part of the DISP complex, may regulate the association of septins with actin and thereby regulate the actin cytoskeleton. May play a role in transporting DAB2 from the plasma membrane to specific cellular targets. May play a role in the extension and network organization of neurites. Required for structural integrity of inner ear hair cells. Required for the correct localization of CLIC5 and RDX at the stereocilium base. Modulates RNA polymerase II-dependent transcription. The polypeptide is Unconventional myosin-VI (Bos taurus (Bovine)).